We begin with the raw amino-acid sequence, 810 residues long: RING finger protein unkempt homolog (810 aa).

The disordered stretch occupies residues 1 to 24; the sequence is MSKGPGPGGSAASSAPPAATAQVL. Low complexity predominate over residues 10–19; sequence SAASSAPPAA. 5 C3H1-type zinc fingers span residues 84–113, 124–154, 215–241, 251–285, and 293–321; these read YSPD…HRTT, YYKT…HGPH, NYKT…HNSK, KYRS…HTRT, and IYKS…HIEP. The disordered stretch occupies residues 239–265; the sequence is NSKDRRRSPRKHKYRSSPCPNVKHGDE. Position 240 is a phosphoserine (Ser-240). The span at 241 to 253 shows a compositional bias: basic residues; sequence KDRRRSPRKHKYR. Ser-374, Ser-378, Ser-385, and Ser-394 each carry phosphoserine. The tract at residues 478–497 is disordered; sequence TSSLAATPPSPAGTNSTPGM. A Phosphoserine modification is found at Ser-631. The stretch at 643 to 727 forms a coiled coil; sequence GAAELARLRQ…ERLHTVPEAQ (85 aa). The RING-type; degenerate zinc-finger motif lies at 766-801; the sequence is SVKCLKCQEQTRAVLPCQHAVLCELCAEGSECPVCQ.

The protein belongs to the unkempt family.

Its subcellular location is the cytoplasm. Its function is as follows. Sequence-specific RNA-binding protein which plays an important role in the establishment and maintenance of the early morphology of cortical neurons during embryonic development. Acts as a translation repressor and controls a translationally regulated cell morphology program to ensure proper structuring of the nervous system. Translational control depends on recognition of its binding element within target mRNAs which consists of a mandatory UAG trimer upstream of a U/A-rich motif. Associated with polysomes. The chain is RING finger protein unkempt homolog (Unk) from Mus musculus (Mouse).